Reading from the N-terminus, the 165-residue chain is Transcription antitermination protein NusB (165 aa).

Positions 1–20 are disordered; that stretch reads MSDVENGGEPRQPSVKPANQ.

This sequence belongs to the NusB family.

Involved in transcription antitermination. Required for transcription of ribosomal RNA (rRNA) genes. Binds specifically to the boxA antiterminator sequence of the ribosomal RNA (rrn) operons. The polypeptide is Transcription antitermination protein NusB (Agrobacterium fabrum (strain C58 / ATCC 33970) (Agrobacterium tumefaciens (strain C58))).